Here is a 485-residue protein sequence, read N- to C-terminus: GTPase Der (485 aa).

2 EngA-type G domains span residues 3-167 (PTIA…PEPE) and 176-349 (PVFA…NAAM). Residues 9 to 16 (GRPNVGKS), 56 to 60 (DTGGF), 119 to 122 (NKGE), 182 to 189 (GRPNVGKS), 229 to 233 (DTAGV), and 294 to 297 (NKWD) each bind GTP. Positions 350–434 (IKMPTPKITR…PLRIQYNVSE (85 aa)) constitute a KH-like domain. A disordered region spans residues 435 to 485 (NPYENADDKPKKKPLRRVSLSNRIEKREGRKEEKNRFKKKTKVSVKKQFSK). Over residues 457-469 (RIEKREGRKEEKN) the composition is skewed to basic and acidic residues. The span at 470–485 (RFKKKTKVSVKKQFSK) shows a compositional bias: basic residues.

Belongs to the TRAFAC class TrmE-Era-EngA-EngB-Septin-like GTPase superfamily. EngA (Der) GTPase family. In terms of assembly, associates with the 50S ribosomal subunit.

Functionally, GTPase that plays an essential role in the late steps of ribosome biogenesis. The sequence is that of GTPase Der from Neisseria meningitidis serogroup A / serotype 4A (strain DSM 15465 / Z2491).